Reading from the N-terminus, the 309-residue chain is Verprolin (309 aa).

The span at 1–13 (MAPAPPPPPPAPA) shows a compositional bias: pro residues. The tract at residues 1 to 273 (MAPAPPPPPP…PNRVDDHGRF (273 aa)) is disordered. The region spanning 27–44 (DRSALLNSIQKGKKLKKA) is the WH2 domain. A compositionally biased stretch (polar residues) spans 82–91 (LPTSSNNTQQ). Residues 141-207 (TSAPPRPSIP…PPKVPPPPLS (67 aa)) show a composition bias toward pro residues.

The protein belongs to the verprolin family. Interacts with wsp1. Interacts with myo1 (via SH3 domain). Interacts with actin monomers.

It is found in the cytoplasm. The protein localises to the cytoskeleton. Its function is as follows. Involved in cytoskeletal organization and cellular growth. May exert its effects on the cytoskeleton directly, or indirectly via proline-binding proteins such as profilin or proteins possessing SH3 domains. Plays a role in actin patch assembly by enhancing the ability of myo1 to stimulate actin polymerization by the Arp2/3 complex. The polypeptide is Verprolin (Schizosaccharomyces pombe (strain 972 / ATCC 24843) (Fission yeast)).